The following is a 320-amino-acid chain: HPr kinase/phosphorylase (320 aa).

Catalysis depends on residues His139 and Lys160. An ATP-binding site is contributed by 154–161 (GDSGVGKS). Ser161 is a binding site for Mg(2+). Residue Asp178 is the Proton acceptor; for phosphorylation activity. Proton donor; for dephosphorylation activity of the active site. The tract at residues 202–211 (MEIRGIGIID) is important for the catalytic mechanism of both phosphorylation and dephosphorylation. Residue Glu203 coordinates Mg(2+). Residue Arg244 is part of the active site. The important for the catalytic mechanism of dephosphorylation stretch occupies residues 265–270 (PVKTGR).

It belongs to the HPrK/P family. As to quaternary structure, homohexamer. It depends on Mg(2+) as a cofactor.

It carries out the reaction [HPr protein]-L-serine + ATP = [HPr protein]-O-phospho-L-serine + ADP + H(+). The catalysed reaction is [HPr protein]-O-phospho-L-serine + phosphate + H(+) = [HPr protein]-L-serine + diphosphate. In terms of biological role, catalyzes the ATP- as well as the pyrophosphate-dependent phosphorylation of a specific serine residue in HPr, a phosphocarrier protein of the phosphoenolpyruvate-dependent sugar phosphotransferase system (PTS). HprK/P also catalyzes the pyrophosphate-producing, inorganic phosphate-dependent dephosphorylation (phosphorolysis) of seryl-phosphorylated HPr (P-Ser-HPr). The two antagonistic activities of HprK/P are regulated by several intracellular metabolites, which change their concentration in response to the absence or presence of rapidly metabolisable carbon sources (glucose, fructose, etc.) in the growth medium. Therefore, by controlling the phosphorylation state of HPr, HPrK/P is a sensor enzyme that plays a major role in the regulation of carbon metabolism and sugar transport: it mediates carbon catabolite repression (CCR), and regulates PTS-catalyzed carbohydrate uptake and inducer exclusion. The chain is HPr kinase/phosphorylase from Limosilactobacillus reuteri (strain DSM 20016) (Lactobacillus reuteri).